Here is a 147-residue protein sequence, read N- to C-terminus: 3-dehydroquinate dehydratase (147 aa).

Tyrosine 23 acts as the Proton acceptor in catalysis. 3 residues coordinate substrate: asparagine 74, histidine 80, and aspartate 87. Residue histidine 100 is the Proton donor of the active site. Substrate-binding positions include leucine 101 to serine 102 and arginine 111.

It belongs to the type-II 3-dehydroquinase family. As to quaternary structure, homododecamer.

The enzyme catalyses 3-dehydroquinate = 3-dehydroshikimate + H2O. Its pathway is metabolic intermediate biosynthesis; chorismate biosynthesis; chorismate from D-erythrose 4-phosphate and phosphoenolpyruvate: step 3/7. Its function is as follows. Catalyzes a trans-dehydration via an enolate intermediate. This chain is 3-dehydroquinate dehydratase, found in Clostridium botulinum (strain Okra / Type B1).